A 136-amino-acid chain; its full sequence is Probable disulfide formation protein (136 aa).

The helical transmembrane segment at Asn7–Tyr26 threads the bilayer. Cys36 and Cys39 form a disulfide bridge. Helical transmembrane passes span Tyr41–Glu60 and Tyr67–Cys84. A disulfide bond links Cys96 and Cys101. The chain crosses the membrane as a helical span at residues Gly109–Ser133.

This sequence belongs to the DsbB family. BdbC subfamily.

Its subcellular location is the cell inner membrane. Its function is as follows. Required for disulfide bond formation in some proteins. The chain is Probable disulfide formation protein from Chlamydia caviae (strain ATCC VR-813 / DSM 19441 / 03DC25 / GPIC) (Chlamydophila caviae).